Reading from the N-terminus, the 389-residue chain is uncharacterized protein (389 aa).

This sequence belongs to the mimivirus L17x/L18x family.

This is an uncharacterized protein from Acanthamoeba polyphaga mimivirus (APMV).